The following is a 277-amino-acid chain: Acetyl-coenzyme A carboxylase carboxyl transferase subunit beta (277 aa).

Residues 22-277 (LWTKCPGCNR…TLKQLLYFLT (256 aa)) form the CoA carboxyltransferase N-terminal domain. 4 residues coordinate Zn(2+): Cys26, Cys29, Cys45, and Cys48. The C4-type zinc finger occupies 26–48 (CPGCNRFLYTKELELNQSVCHYC).

Belongs to the AccD/PCCB family. As to quaternary structure, acetyl-CoA carboxylase is a heterohexamer composed of biotin carboxyl carrier protein (AccB), biotin carboxylase (AccC) and two subunits each of ACCase subunit alpha (AccA) and ACCase subunit beta (AccD). Zn(2+) serves as cofactor.

It localises to the cytoplasm. It carries out the reaction N(6)-carboxybiotinyl-L-lysyl-[protein] + acetyl-CoA = N(6)-biotinyl-L-lysyl-[protein] + malonyl-CoA. It participates in lipid metabolism; malonyl-CoA biosynthesis; malonyl-CoA from acetyl-CoA: step 1/1. In terms of biological role, component of the acetyl coenzyme A carboxylase (ACC) complex. Biotin carboxylase (BC) catalyzes the carboxylation of biotin on its carrier protein (BCCP) and then the CO(2) group is transferred by the transcarboxylase to acetyl-CoA to form malonyl-CoA. The chain is Acetyl-coenzyme A carboxylase carboxyl transferase subunit beta from Methylacidiphilum infernorum (isolate V4) (Methylokorus infernorum (strain V4)).